Reading from the N-terminus, the 270-residue chain is Formamidopyrimidine-DNA glycosylase (270 aa).

Pro2 functions as the Schiff-base intermediate with DNA in the catalytic mechanism. Glu3 functions as the Proton donor in the catalytic mechanism. The Proton donor; for beta-elimination activity role is filled by Lys58. His91, Arg110, and Arg151 together coordinate DNA. The segment at 236–270 (FAYGRAGEFCKVCGTTLREVKLGQRASVYCPRCQR) adopts an FPG-type zinc-finger fold. The active-site Proton donor; for delta-elimination activity is Arg260.

Belongs to the FPG family. As to quaternary structure, monomer. Zn(2+) is required as a cofactor.

The catalysed reaction is Hydrolysis of DNA containing ring-opened 7-methylguanine residues, releasing 2,6-diamino-4-hydroxy-5-(N-methyl)formamidopyrimidine.. The enzyme catalyses 2'-deoxyribonucleotide-(2'-deoxyribose 5'-phosphate)-2'-deoxyribonucleotide-DNA = a 3'-end 2'-deoxyribonucleotide-(2,3-dehydro-2,3-deoxyribose 5'-phosphate)-DNA + a 5'-end 5'-phospho-2'-deoxyribonucleoside-DNA + H(+). Involved in base excision repair of DNA damaged by oxidation or by mutagenic agents. Acts as a DNA glycosylase that recognizes and removes damaged bases. Has a preference for oxidized purines, such as 7,8-dihydro-8-oxoguanine (8-oxoG). Has AP (apurinic/apyrimidinic) lyase activity and introduces nicks in the DNA strand. Cleaves the DNA backbone by beta-delta elimination to generate a single-strand break at the site of the removed base with both 3'- and 5'-phosphates. The polypeptide is Formamidopyrimidine-DNA glycosylase (Ectopseudomonas mendocina (strain ymp) (Pseudomonas mendocina)).